Reading from the N-terminus, the 388-residue chain is Purple acid phosphatase 19 (388 aa).

The N-terminal stretch at 1 to 24 is a signal peptide; it reads MGLNHLTLVCSAIALLSIFVVSQA. N-linked (GlcNAc...) asparagine glycans are attached at residues Asn97 and Asn111. 2 residues coordinate Fe cation: Asp145 and Tyr148. Asp145 serves as a coordination point for Zn(2+). A Zn(2+)-binding site is contributed by Asn182. Asn182 is a binding site for substrate. A glycan (N-linked (GlcNAc...) asparagine) is linked at Asn226. His238 is a binding site for Zn(2+). The active-site Proton donor is the His248. His275 provides a ligand contact to Zn(2+). A substrate-binding site is contributed by 275 to 277; it reads HVH. Residue His277 coordinates Fe cation. N-linked (GlcNAc...) asparagine glycosylation is found at Asn291 and Asn348.

This sequence belongs to the metallophosphoesterase superfamily. Purple acid phosphatase family. Homodimer. The cofactor is Fe cation. Zn(2+) is required as a cofactor. Specifically expressed in flowers.

The protein resides in the secreted. It catalyses the reaction a phosphate monoester + H2O = an alcohol + phosphate. This chain is Purple acid phosphatase 19 (PAP19), found in Arabidopsis thaliana (Mouse-ear cress).